Consider the following 140-residue polypeptide: Endoribonuclease YbeY (140 aa).

Positions 105, 109, and 115 each coordinate Zn(2+).

Belongs to the endoribonuclease YbeY family. Zn(2+) serves as cofactor.

It is found in the cytoplasm. Its function is as follows. Single strand-specific metallo-endoribonuclease involved in late-stage 70S ribosome quality control and in maturation of the 3' terminus of the 16S rRNA. This Flavobacterium psychrophilum (strain ATCC 49511 / DSM 21280 / CIP 103535 / JIP02/86) protein is Endoribonuclease YbeY.